A 62-amino-acid chain; its full sequence is MPKMKTKSALKKRIKVTATGKVIREQAYRSHLAQNKTTKQKRQSRKSAQMHSSDLKRFKALI.

Residues 31 to 62 (HLAQNKTTKQKRQSRKSAQMHSSDLKRFKALI) form a disordered region. Basic and acidic residues predominate over residues 53-62 (SDLKRFKALI).

The protein belongs to the bacterial ribosomal protein bL35 family.

This Mycoplasmopsis agalactiae (strain NCTC 10123 / CIP 59.7 / PG2) (Mycoplasma agalactiae) protein is Large ribosomal subunit protein bL35.